Here is a 296-residue protein sequence, read N- to C-terminus: Ribosomal RNA small subunit methyltransferase A (296 aa).

Residues Asn30, Leu32, Gly57, Glu78, Asp103, and Asn128 each contribute to the S-adenosyl-L-methionine site.

It belongs to the class I-like SAM-binding methyltransferase superfamily. rRNA adenine N(6)-methyltransferase family. RsmA subfamily.

The protein resides in the cytoplasm. It carries out the reaction adenosine(1518)/adenosine(1519) in 16S rRNA + 4 S-adenosyl-L-methionine = N(6)-dimethyladenosine(1518)/N(6)-dimethyladenosine(1519) in 16S rRNA + 4 S-adenosyl-L-homocysteine + 4 H(+). Specifically dimethylates two adjacent adenosines (A1518 and A1519) in the loop of a conserved hairpin near the 3'-end of 16S rRNA in the 30S particle. May play a critical role in biogenesis of 30S subunits. The protein is Ribosomal RNA small subunit methyltransferase A of Macrococcus caseolyticus (strain JCSC5402) (Macrococcoides caseolyticum).